A 274-amino-acid polypeptide reads, in one-letter code: Rhamnulose-1-phosphate aldolase (274 aa).

The active site involves Glu-117. The Zn(2+) site is built by His-141, His-143, and His-212.

It belongs to the aldolase class II family. RhaD subfamily. In terms of assembly, homotetramer. Zn(2+) is required as a cofactor.

The protein localises to the cytoplasm. It carries out the reaction L-rhamnulose 1-phosphate = (S)-lactaldehyde + dihydroxyacetone phosphate. It participates in carbohydrate degradation; L-rhamnose degradation; glycerone phosphate from L-rhamnose: step 3/3. Functionally, catalyzes the reversible cleavage of L-rhamnulose-1-phosphate to dihydroxyacetone phosphate (DHAP) and L-lactaldehyde. The chain is Rhamnulose-1-phosphate aldolase from Escherichia coli O157:H7.